The following is a 368-amino-acid chain: Protein-glutamate methylesterase/protein-glutamine glutaminase (368 aa).

Positions 9 to 126 (RVLVVDDSAF…SINMRELKDE (118 aa)) constitute a Response regulatory domain. Position 60 is a 4-aspartylphosphate (aspartate 60). In terms of domain architecture, CheB-type methylesterase spans 161–354 (SVPARIAVAI…ETVVRAVEMI (194 aa)). Catalysis depends on residues serine 173, histidine 200, and aspartate 296.

The protein belongs to the CheB family. Post-translationally, phosphorylated by CheA. Phosphorylation of the N-terminal regulatory domain activates the methylesterase activity.

It localises to the cytoplasm. The enzyme catalyses [protein]-L-glutamate 5-O-methyl ester + H2O = L-glutamyl-[protein] + methanol + H(+). It catalyses the reaction L-glutaminyl-[protein] + H2O = L-glutamyl-[protein] + NH4(+). In terms of biological role, involved in chemotaxis. Part of a chemotaxis signal transduction system that modulates chemotaxis in response to various stimuli. Catalyzes the demethylation of specific methylglutamate residues introduced into the chemoreceptors (methyl-accepting chemotaxis proteins or MCP) by CheR. Also mediates the irreversible deamidation of specific glutamine residues to glutamic acid. This Pyrococcus abyssi (strain GE5 / Orsay) protein is Protein-glutamate methylesterase/protein-glutamine glutaminase.